Here is a 393-residue protein sequence, read N- to C-terminus: Pyrimidine monooxygenase RutA (393 aa).

FMN contacts are provided by residues 79-80 (IK), Asn145, Glu154, 170-171 (RY), and Ser220.

This sequence belongs to the NtaA/SnaA/DszA monooxygenase family. RutA subfamily.

The catalysed reaction is uracil + FMNH2 + NADH + O2 = (Z)-3-ureidoacrylate + FMN + NAD(+) + H2O + H(+). It catalyses the reaction thymine + FMNH2 + NADH + O2 = (Z)-2-methylureidoacrylate + FMN + NAD(+) + H2O + H(+). In terms of biological role, catalyzes the pyrimidine ring opening between N-3 and C-4 by an unusual flavin hydroperoxide-catalyzed mechanism, adding oxygen atoms in the process to yield ureidoacrylate peracid, that immediately reacts with FMN forming ureidoacrylate and FMN-N(5)-oxide. The FMN-N(5)-oxide reacts spontaneously with NADH to produce FMN. Requires the flavin reductase RutF to regenerate FMN in vivo. The protein is Pyrimidine monooxygenase RutA of Escherichia coli O9:H4 (strain HS).